A 310-amino-acid chain; its full sequence is Repression factor of MSEs protein 1 (310 aa).

Disordered regions lie at residues 83-155 and 192-230; these read TQEV…EANA and DGIRRRSSRISERDKRRSQSRLGSEEDEEGDGHDGDEGE. Low complexity predominate over residues 92–106; the sequence is RNTSSSSSSTRSNSS. A compositionally biased stretch (polar residues) spans 107-120; sequence ADISDTEYSGENTP. Residues 127–136 are compositionally biased toward basic residues; the sequence is SRRRRTRSRA. Residues 139–155 are compositionally biased toward polar residues; sequence RENSLPASLPSISEANA. The span at 192–208 shows a compositional bias: basic and acidic residues; sequence DGIRRRSSRISERDKRR. Ser215 carries the phosphoserine modification.

As to quaternary structure, interacts directly with HST1 and SUM1. Required for the interaction between HST1 and SUM1.

It is found in the nucleus. Its function is as follows. Tethering factor required for histone deacetylase HST1-mediated repression. Probably involved in targeting HST1 to a subset of SUM1-regulated genes. This Saccharomyces cerevisiae (strain ATCC 204508 / S288c) (Baker's yeast) protein is Repression factor of MSEs protein 1 (RFM1).